Consider the following 416-residue polypeptide: Histidine--tRNA ligase (416 aa).

This sequence belongs to the class-II aminoacyl-tRNA synthetase family. As to quaternary structure, homodimer.

Its subcellular location is the cytoplasm. It catalyses the reaction tRNA(His) + L-histidine + ATP = L-histidyl-tRNA(His) + AMP + diphosphate + H(+). This chain is Histidine--tRNA ligase, found in Dictyoglomus thermophilum (strain ATCC 35947 / DSM 3960 / H-6-12).